The following is a 1723-amino-acid chain: Homeobox protein 5 (1723 aa).

Residues 36 to 50 (QLQQPQHQPQHYQQQ) show a composition bias toward low complexity. 9 disordered regions span residues 36–425 (QLQQ…APGT), 440–522 (SSSP…QLQQ), 543–756 (ENIT…PPLT), 878–978 (GTIV…TGSL), 1080–1214 (IFNN…SENN), 1226–1264 (VSLG…NQQQ), 1345–1399 (IVNN…TQTS), 1456–1498 (QQQQ…STTT), and 1513–1547 (HNQQ…SRRK). Positions 51-72 (DSFVSPNLDNNNPQIHVQSNNY) are enriched in polar residues. Low complexity-rich tracts occupy residues 73 to 107 (NQNG…NNSS) and 114 to 212 (NNSS…NNNN). 2 stretches are compositionally biased toward polar residues: residues 223-237 (SQPT…QHNP) and 244-257 (GQHN…MVMD). Low complexity-rich tracts occupy residues 258-284 (NNNN…NSNS) and 291-350 (NNNN…NNNN). Residues 300–351 (YNNNNNNNNNNNSNSNNNNNNNNNNNNNNNNNNNNNNNNNNNNNSNNNNNNQ) are a coiled coil. The segment covering 351–369 (QFSQSYDSTLGNNRFSSMM) has biased composition (polar residues). Composition is skewed to low complexity over residues 371 to 421 (QPIQ…LIGS) and 440 to 465 (SSSP…LSSS). A compositionally biased stretch (polar residues) spans 483-510 (MSSITNTNLKSTQASTLKESKRSNSSPN). Composition is skewed to low complexity over residues 511-522 (LKKQMQLQQLQQ), 544-571 (NITN…ITNN), and 581-593 (NSNN…DSIN). The span at 632-655 (HISTTQQSPSLNGSTGGSMLTPTM) shows a compositional bias: polar residues. Residues 660 to 669 (LSGGGSGGGF) are compositionally biased toward gly residues. Polar residues predominate over residues 673–685 (ISPTGTTSNKDLQ). 3 stretches are compositionally biased toward low complexity: residues 686–699 (SSPS…SMSM), 710–727 (SMSS…SNGL), and 734–745 (SNNMNSSGGIPT). Positions 746–755 (PSTPTSPPPL) are enriched in pro residues. A compositionally biased stretch (low complexity) spans 882-928 (NPTNVNNNNINNNNNNNNNNNNNNNNNNNNNNNNNNNNTTTTTTTTT). A compositionally biased stretch (polar residues) spans 929 to 945 (SANTVQSGTTSNSNLVF). Low complexity-rich tracts occupy residues 946–977 (QQTS…STGS) and 1082–1146 (NNNN…SINS). Composition is skewed to polar residues over residues 1147–1159 (PRPS…NSSG) and 1176–1187 (DISTGLMASSDQ). Residues 1193–1270 (QQQQHQQLVN…NQQQILHQQL (78 aa)) adopt a coiled-coil conformation. A compositionally biased stretch (low complexity) spans 1194-1214 (QQQHQQLVNNNNNNMNNSENN). The segment covering 1226-1242 (VSLGSLPTNTPSSMEIE) has biased composition (polar residues). Low complexity-rich tracts occupy residues 1243 to 1264 (QQQQ…NQQQ), 1347 to 1384 (NNQN…TNTP), 1456 to 1480 (QQQQ…RSSP), 1487 to 1498 (SNTNTTTTSTTT), and 1518 to 1528 (SPISPRSPRSP). The stretch at 1431–1464 (VLQQQQQQQQQQQQQQQQQQQQQQQQQQQQQQET) forms a coiled coil. Over residues 1529 to 1543 (HGTSGDYNDGSQSPS) the composition is skewed to polar residues. A DNA-binding region (homeobox) is located at residues 1543-1607 (SSRRKNRFTD…NKRARSRPSP (65 aa)). In terms of domain architecture, EF-hand spans 1553-1588 (FQIKRMNDCFENLDKNNNGKFTSEEICQIATELGLT). Disordered stretches follow at residues 1598–1625 (NKRA…GNNS) and 1661–1723 (LHQQ…TINE). The segment covering 1612–1625 (TNPLTSSTNNGNNS) has biased composition (low complexity). Residues 1632–1702 (LQQQHLQQVQ…NNNNNNNNNN (71 aa)) are a coiled coil. A compositionally biased stretch (polar residues) spans 1665-1675 (SANTTPQLNSM). Residues 1676-1723 (NPNSINYNNNNNNNNNNNNNNNNNNNNNNNNNNNNNNIINNNITTINE) show a composition bias toward low complexity.

It localises to the nucleus. Putative transcription factor. The protein is Homeobox protein 5 (hbx5-1) of Dictyostelium discoideum (Social amoeba).